The following is a 514-amino-acid chain: Tumor necrosis factor receptor superfamily member EDAR (514 aa).

The first 27 residues, 1 to 27 (MKMWKRRGQKKSMFLSSLLVCCMFASA), serve as a signal peptide directing secretion. The Extracellular segment spans residues 28–183 (EYSSCGEYEF…SPGQGHLATA (156 aa)). 3 TNFR-Cys repeats span residues 31-72 (SCGE…GFAC), 74-114 (PCPQ…DAEC), and 116-149 (PCLPGYYMLENRARNLYAMVCHSCQNAPLNTKEC). Disulfide bonds link Cys32–Cys45, Cys48–Cys61, Cys51–Cys72, Cys75–Cys88, Cys94–Cys114, Cys117–Cys136, and Cys139–Cys149. N-linked (GlcNAc...) asparagine glycosylation is found at Asn39 and Asn58. The helical transmembrane segment at 184 to 204 (LIIAMSTIFIMAIAIVLIIMF) threads the bilayer. Over 205–514 (YILKAKPNGQ…TSPSPRCASV (310 aa)) the chain is Cytoplasmic. The segment at 254 to 294 (LKASPQKTVKSENDASSENEQLLSRSIDSDEEPTSDKLRSS) is disordered. Residues 267–279 (DASSENEQLLSRS) show a composition bias toward polar residues. In terms of domain architecture, Death spans 403–476 (RMLSSSYSSD…DAVESLCADV (74 aa)).

The protein resides in the membrane. Its function is as follows. Receptor for EDA. May mediate the activation of NF-kappa-B and JNK. This chain is Tumor necrosis factor receptor superfamily member EDAR (edar), found in Oryzias latipes (Japanese rice fish).